The sequence spans 84 residues: Small ribosomal subunit protein bS16 (84 aa).

It belongs to the bacterial ribosomal protein bS16 family.

This chain is Small ribosomal subunit protein bS16, found in Deinococcus radiodurans (strain ATCC 13939 / DSM 20539 / JCM 16871 / CCUG 27074 / LMG 4051 / NBRC 15346 / NCIMB 9279 / VKM B-1422 / R1).